Reading from the N-terminus, the 426-residue chain is Tyrosine-protein phosphatase non-receptor type 20 (426 aa).

A compositionally biased stretch (basic residues) spans 1-10; it reads MSSPRKVRGK. The tract at residues 1–58 is disordered; it reads MSSPRKVRGKTGRDNDEEEGNSGNLNLRNSLPSSSQKMTPTKPIFGNKMNSENVKPSH. The span at 21–35 shows a compositional bias: low complexity; it reads NSGNLNLRNSLPSSS. Residue Ser-76 is modified to Phosphoserine. The span at 95–117 shows a compositional bias: polar residues; it reads NSMDSETAGPSKTVSPVLSGSSR. The tract at residues 95-124 is disordered; it reads NSMDSETAGPSKTVSPVLSGSSRLSKDTET. At Ser-127 the chain carries Phosphoserine. In terms of domain architecture, Tyrosine-protein phosphatase spans 165-418; sequence IIREFLELEQ…QFCYEIVLEV (254 aa). Residues Asp-329, 359–365, and Gln-403 each bind substrate; that span reads CSAGVGR. Cys-359 acts as the Phosphocysteine intermediate in catalysis.

This sequence belongs to the protein-tyrosine phosphatase family. Non-receptor class subfamily. In terms of tissue distribution, testis-specific. Specifically expressed in testicular germ cells that undergo meiosis (at protein level).

It localises to the nucleus. The protein resides in the cytoplasm. The protein localises to the cytoskeleton. It is found in the microtubule organizing center. Its subcellular location is the centrosome. The enzyme catalyses O-phospho-L-tyrosyl-[protein] + H2O = L-tyrosyl-[protein] + phosphate. Tyrosine-protein phosphatase targeted to sites of actin polymerization in response of varied extracellular stimuli. Has tyrosine phosphatase activity towards various tyrosyl phosphorylated substrates. The sequence is that of Tyrosine-protein phosphatase non-receptor type 20 (Ptpn20) from Mus musculus (Mouse).